A 589-amino-acid polypeptide reads, in one-letter code: MGGPAYDCLTNPLGAVRFSFVNALSSGYDPASSVGKDWGVVDLFRHYFSDESAISQVPILDSSSIKWVQPKTLVRFRGMIQDMLGNEFYAGAYKDDSTWRTNKYSDVSQFPEGSSTEIQVWERRLLYCVPVPGKNQWTECSSQELKNRFLDLTGQNREKRVRVDEEMTDSMDSSTLEAGRNGSPFKKMKVGEATSSASESQVPQTSGIPPATSADSLPCLVKIYDSPESDLKLNDVVEFLGVLTFDPIVMMDTDTLDENSDALSEAESVQMPSGKVPRLHCLIHRKLETQHFLHGSSLLPEPKSPQIFKEIRESLMKYLTGLLGNDHIAAQFLLLHLLSKVHGRVDNVAVGKLSLNLIHLNKESMSIFGTQLSGALKSLLPFTQSIPLTIEYLNTASFGPKKDYGINRLMPGVLQIADGTHLILDETELQPGTLNSVGVENANLLKNLLECQKVEYDFQYYKMEMATDVQMLIFSEGKSNIMPADLVLPLQPSQVNSLEVITPETAETWRCYLATCKSLSHSIGQELQQVVENDLVAARQTDRSLGSQDLSRLLTMARMMSVSYGETTLSLEHWQMVLELERLRKERLK.

The disordered stretch occupies residues valine 163 to alanine 211. Over residues alanine 193–glycine 207 the composition is skewed to polar residues.

Belongs to the MCMBP family. As to quaternary structure, interacts with the MCM complex.

It localises to the nucleus. Its function is as follows. Associated component of the MCM complex that acts as a regulator of DNA replication. Binds to the MCM complex during late S phase and may act by promoting the disassembly of the MCM complex from chromatin. Required for sister chromatid cohesion. This chain is Mini-chromosome maintenance complex-binding protein (ETG1), found in Arabidopsis thaliana (Mouse-ear cress).